A 427-amino-acid chain; its full sequence is Diaminobutyrate--2-oxoglutarate transaminase (427 aa).

At lysine 264 the chain carries N6-(pyridoxal phosphate)lysine.

The protein belongs to the class-III pyridoxal-phosphate-dependent aminotransferase family. Requires pyridoxal 5'-phosphate as cofactor.

The catalysed reaction is L-2,4-diaminobutanoate + 2-oxoglutarate = L-aspartate 4-semialdehyde + L-glutamate. Its pathway is amine and polyamine biosynthesis; ectoine biosynthesis; L-ectoine from L-aspartate 4-semialdehyde: step 1/3. In terms of biological role, catalyzes reversively the conversion of L-aspartate beta-semialdehyde (ASA) to L-2,4-diaminobutyrate (DABA) by transamination with L-glutamate. The polypeptide is Diaminobutyrate--2-oxoglutarate transaminase (ectB) (Wolinella succinogenes (strain ATCC 29543 / DSM 1740 / CCUG 13145 / JCM 31913 / LMG 7466 / NCTC 11488 / FDC 602W) (Vibrio succinogenes)).